The chain runs to 481 residues: Cobyric acid synthase (481 aa).

In terms of domain architecture, GATase cobBQ-type spans 248-435; the sequence is NTVIAVPMLP…LHGLFHGGAF (188 aa). The active-site Nucleophile is the Cys-329. The active site involves His-427.

The protein belongs to the CobB/CobQ family. CobQ subfamily.

Its pathway is cofactor biosynthesis; adenosylcobalamin biosynthesis. In terms of biological role, catalyzes amidations at positions B, D, E, and G on adenosylcobyrinic A,C-diamide. NH(2) groups are provided by glutamine, and one molecule of ATP is hydrogenolyzed for each amidation. In Granulibacter bethesdensis (strain ATCC BAA-1260 / CGDNIH1), this protein is Cobyric acid synthase.